We begin with the raw amino-acid sequence, 269 residues long: MVTRKMDKRLWSLQGMTALVTGAASGIGYAIVEELAGFGAKIHICDISKTLLNQSLSEWENKGFQVSGSVCDVTSHPEREKLMQTVSSIFDGKLNILVNNVGVLRGKPTTEYVADDFTFHISTNLEAAYHFCQLSHPLLKASGYGSIVFLSSVAGVVSLIDCGSIYGLTKGALNQLARNLACEWAKDGIRANAVAPNVVKTAQSQSFLEDVSKKEGLLSRTPLGRVGEPNEVSSLVVFLCLPAASYITGQTICVDGGLTVNGFSYQPHA.

19 to 43 (LVTGAASGIGYAIVEELAGFGAKIH) is an NADP(+) binding site. Ser152 provides a ligand contact to substrate. Tyr166 serves as the catalytic Proton acceptor.

The protein belongs to the short-chain dehydrogenases/reductases (SDR) family. SDR65C subfamily.

This is Tropinone reductase homolog At2g29320 from Arabidopsis thaliana (Mouse-ear cress).